The following is a 208-amino-acid chain: Methylthioribulose-1-phosphate dehydratase (208 aa).

Zn(2+)-binding residues include H98 and H100.

The protein belongs to the aldolase class II family. MtnB subfamily. Requires Zn(2+) as cofactor.

The enzyme catalyses 5-(methylsulfanyl)-D-ribulose 1-phosphate = 5-methylsulfanyl-2,3-dioxopentyl phosphate + H2O. The protein operates within amino-acid biosynthesis; L-methionine biosynthesis via salvage pathway; L-methionine from S-methyl-5-thio-alpha-D-ribose 1-phosphate: step 2/6. Catalyzes the dehydration of methylthioribulose-1-phosphate (MTRu-1-P) into 2,3-diketo-5-methylthiopentyl-1-phosphate (DK-MTP-1-P). The sequence is that of Methylthioribulose-1-phosphate dehydratase from Marinobacter nauticus (strain ATCC 700491 / DSM 11845 / VT8) (Marinobacter aquaeolei).